The primary structure comprises 532 residues: Fatty aldehyde dehydrogenase HFD1 (532 aa).

The residue at position 111 (S111) is a Phosphoserine. A helical transmembrane segment spans residues 134–152 (IIAPFNFPLLLAFAPLAAA). 214 to 219 (GSPRVG) contributes to the NAD(+) binding site. Catalysis depends on residues E236 and C273.

The protein belongs to the aldehyde dehydrogenase family.

It localises to the lipid droplet. It is found in the mitochondrion outer membrane. Its subcellular location is the endosome membrane. The protein localises to the cytoplasmic granule membrane. It catalyses the reaction an aldehyde + NAD(+) + H2O = a carboxylate + NADH + 2 H(+). The enzyme catalyses hexadecanoate + NADH + 2 H(+) = hexadecanal + NAD(+) + H2O. The catalysed reaction is 4-hydroxybenzaldehyde + NAD(+) + H2O = 4-hydroxybenzoate + NADH + 2 H(+). Its function is as follows. Catalyzes the oxidation of long-chain aliphatic aldehydes to fatty acids. Responsible for conversion of the sphingosine 1-phosphate (S1P) degradation product hexadecenal to hexadecenoic acid. Involved in coenzyme Q (CoQ) biosynthesis, catalyzing the last step in the tyrosine to 4-hydroxybenzoate (4-HB) pathway. Oxidizes 4-hydroxybenzaldehyde (4-Hbz) to 4-HB, the aromatic precursor for coenzyme Q. The sequence is that of Fatty aldehyde dehydrogenase HFD1 (HFD1) from Saccharomyces cerevisiae (strain ATCC 204508 / S288c) (Baker's yeast).